The following is a 335-amino-acid chain: MKFSKGIHAIDSHTMGEPTRIVVGGIPQINGETMADKKKYLEDNLDYVRTALMHEPRGHNDMFGSIITSSNNKEADFGIIFMDGGGYLNMCGHGSIGAATVAVETGMVEMVEPVTNINMEAPAGLIKAKVMVENEKVKEVSITNVPSFLYMEDAKLEVPSLNKTITFDISFGGSFFAIIHAKELGVKVETSQVDVLKKLGIEIRDLINEKIKVQHPELEHIKTVDLVEIYDEPSNPEATYKNVVIFGQGQVDRSPCGTGTSAKLATLYKKGHLKIDEKFVYESITGTMFKGRVLEETKVGEFDAIIPEITGGAYITGFNHFVIDPEDPLKYGFTV.

Catalysis depends on Cys-91, which acts as the Proton acceptor. The Proton donor role is filled by Cys-256.

This sequence belongs to the proline racemase family.

It catalyses the reaction L-proline = D-proline. With respect to regulation, inhibited by pyrrole-2-carboxylate in vitro. Functionally, catalyzes the reversible interconversion of L- and D-proline. Likely functions as the proline racemase necessary for D-proline generation in order to discriminate it from the L-proline used for protein synthesis. This Acetoanaerobium sticklandii (strain ATCC 12662 / DSM 519 / JCM 1433 / CCUG 9281 / NCIMB 10654 / HF) (Clostridium sticklandii) protein is Proline racemase.